The chain runs to 598 residues: Beta-fructofuranosidase, insoluble isoenzyme 2 (598 aa).

The N-terminal stretch at 1–25 is a signal peptide; the sequence is MGVLGSRVAWAWLVQLLLLQQLAGA. Residue aspartate 69 is part of the active site. N-linked (GlcNAc...) asparagine glycosylation is found at asparagine 164, asparagine 189, and asparagine 348.

It belongs to the glycosyl hydrolase 32 family. Expressed in leaves and flowers. Weakly expressed in seeds. Expressed in growing roots, node and the rapidly elongating zone of the internode.

It is found in the secreted. The protein localises to the cell wall. It carries out the reaction Hydrolysis of terminal non-reducing beta-D-fructofuranoside residues in beta-D-fructofuranosides.. Functionally, cell wall-associated invertase that cleaves sucrose into glucose and fructose and is required for assimilated carbon partitioning during early grain-filling. May be involved in sucrose unloaded in the ovular and stylar vascular tissues for the stimulation of starch synthesis in the developing endosperm during grain-filling. Sugar homeostasis mediated by CIN2/GIF1 plays an important role in constitutive and induced physical and chemical defense against pathogens. The protein is Beta-fructofuranosidase, insoluble isoenzyme 2 (CIN2) of Oryza sativa subsp. japonica (Rice).